The sequence spans 162 residues: MNVYEGSLVGTGLKAALVVARFNSLVTEQLLVGAADALRRHGVADGDVDVFRCPGTFELPAVLRRVVATGRYDAVVALGAVIRGGTPHFEYVSAEVTKGVAHVAMEAGCAVAMGVLTCDSMEQALERAGVKAGNKGAEAAAAAVEQANVLRAIARAPARKAE.

5-amino-6-(D-ribitylamino)uracil is bound by residues F22, 56–58 (TFE), and 80–82 (AVI). Position 85–86 (85–86 (GT)) interacts with (2S)-2-hydroxy-3-oxobutyl phosphate. H88 serves as the catalytic Proton donor. Residue M113 coordinates 5-amino-6-(D-ribitylamino)uracil. Position 127 (R127) interacts with (2S)-2-hydroxy-3-oxobutyl phosphate.

The protein belongs to the DMRL synthase family.

The catalysed reaction is (2S)-2-hydroxy-3-oxobutyl phosphate + 5-amino-6-(D-ribitylamino)uracil = 6,7-dimethyl-8-(1-D-ribityl)lumazine + phosphate + 2 H2O + H(+). It functions in the pathway cofactor biosynthesis; riboflavin biosynthesis; riboflavin from 2-hydroxy-3-oxobutyl phosphate and 5-amino-6-(D-ribitylamino)uracil: step 1/2. Its function is as follows. Catalyzes the formation of 6,7-dimethyl-8-ribityllumazine by condensation of 5-amino-6-(D-ribitylamino)uracil with 3,4-dihydroxy-2-butanone 4-phosphate. This is the penultimate step in the biosynthesis of riboflavin. The polypeptide is 6,7-dimethyl-8-ribityllumazine synthase (Anaeromyxobacter dehalogenans (strain 2CP-C)).